Here is a 163-residue protein sequence, read N- to C-terminus: COP9 signalosome complex subunit 9 (163 aa).

Residues 5–120 (EVLHAVLDPK…SVGRRIKVLR (116 aa)) enclose the PCI domain.

As to quaternary structure, component of a COP9 signalosome-like (CSN) complex.

Its subcellular location is the cytoplasm. The protein resides in the nucleus. Its function is as follows. Component of the COP9 signalosome (CSN) complex that acts as a regulator of the ubiquitin (Ubl) conjugation pathway by mediating the deneddylation of the cullin subunit of SCF-type E3 ubiquitin-protein ligase complexes. The complex is involved in the regulation of the mating pheromone response. The sequence is that of COP9 signalosome complex subunit 9 (CSN9) from Eremothecium gossypii (strain ATCC 10895 / CBS 109.51 / FGSC 9923 / NRRL Y-1056) (Yeast).